A 121-amino-acid chain; its full sequence is Holo-[acyl-carrier-protein] synthase (121 aa).

Mg(2+) contacts are provided by Asp8 and Glu58.

Belongs to the P-Pant transferase superfamily. AcpS family. It depends on Mg(2+) as a cofactor.

It is found in the cytoplasm. It catalyses the reaction apo-[ACP] + CoA = holo-[ACP] + adenosine 3',5'-bisphosphate + H(+). Functionally, transfers the 4'-phosphopantetheine moiety from coenzyme A to a Ser of acyl-carrier-protein. In Bacillus velezensis (strain DSM 23117 / BGSC 10A6 / LMG 26770 / FZB42) (Bacillus amyloliquefaciens subsp. plantarum), this protein is Holo-[acyl-carrier-protein] synthase.